Reading from the N-terminus, the 337-residue chain is Primase homolog protein (337 aa).

Positions 205–304 (SEIIIVEGEP…WLVKWPKKSE (100 aa)) constitute a Toprim domain. The Mg(2+) site is built by E211, D273, and D275.

It depends on Mg(2+) as a cofactor.

May act as a DNA primase. The chain is Primase homolog protein from Arabidopsis thaliana (Mouse-ear cress).